A 522-amino-acid polypeptide reads, in one-letter code: Cytochrome P450 monooxygenase AKT7 (522 aa).

A helical transmembrane segment spans residues 10-30; it reads LYVTCTVLAALILGYIQAMII. Cysteine 452 provides a ligand contact to heme.

This sequence belongs to the cytochrome P450 family. Requires heme as cofactor.

It is found in the membrane. Its pathway is mycotoxin biosynthesis. In terms of biological role, cytochrome P450 monooxygenase; part of the gene clusters that mediate the biosynthesis of the host-selective toxins (HSTs) AK-toxins responsible for Japanese pear black spot disease by the Japanese pear pathotype. AK-toxins are esters of 9,10-epoxy 8-hydroxy 9-methyldecatrienoic acid (EDA). On cellular level, AK-toxins affect plasma membrane of susceptible cells and cause a sudden increase in loss of K(+) after a few minutes of toxin treatment. The acyl-CoA ligase AKT1, the hydrolase AKT2 and enoyl-CoA hydratase AKT3 are all involved in the biosynthesis of the AK-, AF- and ACT-toxin common 9,10-epoxy-8-hydroxy-9-methyl-decatrienoic acid (EDA) structural moiety. Part of the EDA biosynthesis occurs in the peroxisome since these 3 enzymes are localized in peroxisomes. The exact roles of the 3 enzymes, as well as of additional AK-toxin clusters enzymes, including AKT4, AKT6 and AKTS1, have still to be elucidated. The Cytochrome P450 monooxygenase AKT7 on the other side functions to limit production of EDA and AK-toxin, probably via the catalysis of a side reaction of EDA or its precursor. This is Cytochrome P450 monooxygenase AKT7 from Alternaria alternata (Alternaria rot fungus).